Here is a 448-residue protein sequence, read N- to C-terminus: Putative carbonic anhydrase 2 (448 aa).

The 222-residue stretch at 1–222 (AYRQTENLLY…PAERDVFRII (222 aa)) folds into the Alpha-carbonic anhydrase domain. H19 serves as a coordination point for Zn(2+). N-linked (GlcNAc...) asparagine glycans are attached at residues N139 and N198. Residues 229–448 (RREEDDERGD…DKGDDKGDDN (220 aa)) form a disordered region. A compositionally biased stretch (acidic residues) spans 245–280 (DDDDNYDDDDYYNDDYSNDDYYDDDYYYDDYDDDTD). Basic and acidic residues-rich tracts occupy residues 281-334 (DDHK…DDSG) and 342-354 (RDGRGNGDSRDRN). An N-linked (GlcNAc...) asparagine glycan is attached at N314. Residues 357–368 (NGNGRENGGVRG) are compositionally biased toward gly residues. The segment covering 370-379 (GNDRDGRRDN) has biased composition (basic and acidic residues). The N-linked (GlcNAc...) asparagine glycan is linked to N385. Over residues 386–421 (GTRRGNGDDRGGRRNEDRGENRRGKDDQERESEDGR) the composition is skewed to basic and acidic residues. Basic residues predominate over residues 422–435 (RRRRRFNGRRRRRG). Residues 436-448 (RGDDKGDDKGDDN) show a composition bias toward basic and acidic residues.

Belongs to the alpha-carbonic anhydrase family. Component of the acid-insoluble and acid-soluble organic matrix of calcified layers of the shell (at protein level).

It is found in the secreted. The catalysed reaction is hydrogencarbonate + H(+) = CO2 + H2O. Reversible hydration of carbon dioxide. In Lottia gigantea (Giant owl limpet), this protein is Putative carbonic anhydrase 2.